Consider the following 129-residue polypeptide: Protein Wnt-6 (129 aa).

Intrachain disulfides connect C3–C17, C5–C12, C75–C106, C91–C101, and C128–C129. The O-palmitoleoyl serine; by PORCN moiety is linked to residue S9. A glycan (N-linked (GlcNAc...) asparagine) is linked at N92.

Belongs to the Wnt family. Post-translationally, palmitoleoylation is required for efficient binding to frizzled receptors. Depalmitoleoylation leads to Wnt signaling pathway inhibition. As to expression, at tailbud: dorsal, punctate; in adult: brain and heart.

It localises to the secreted. It is found in the extracellular space. Its subcellular location is the extracellular matrix. Its function is as follows. Ligand for members of the frizzled family of seven transmembrane receptors. Probable developmental protein. May be a signaling molecule which affects the development of discrete regions of tissues. Is likely to signal over only few cell diameters. The sequence is that of Protein Wnt-6 (wnt6) from Xenopus laevis (African clawed frog).